Here is a 91-residue protein sequence, read N- to C-terminus: PqqA binding protein (91 aa).

Belongs to the PqqD family. Monomer. Interacts with PqqE.

It functions in the pathway cofactor biosynthesis; pyrroloquinoline quinone biosynthesis. Its function is as follows. Functions as a PqqA binding protein and presents PqqA to PqqE, in the pyrroloquinoline quinone (PQQ) biosynthetic pathway. In Pseudomonas fluorescens (strain ATCC BAA-477 / NRRL B-23932 / Pf-5), this protein is PqqA binding protein.